A 160-amino-acid chain; its full sequence is uncharacterized protein (160 aa).

The helical transmembrane segment at 47 to 67 (LLGGFANVAAILTPLVAVLAY) threads the bilayer.

Its subcellular location is the membrane. This is an uncharacterized protein from Sinorhizobium fredii (strain NBRC 101917 / NGR234).